We begin with the raw amino-acid sequence, 358 residues long: UDP-N-acetylglucosamine--N-acetylmuramyl-(pentapeptide) pyrophosphoryl-undecaprenol N-acetylglucosamine transferase (358 aa).

Residues 11–13, Asn120, Arg161, Ser188, and Gln282 each bind UDP-N-acetyl-alpha-D-glucosamine; that span reads TGG.

It belongs to the glycosyltransferase 28 family. MurG subfamily.

It is found in the cell inner membrane. The catalysed reaction is di-trans,octa-cis-undecaprenyl diphospho-N-acetyl-alpha-D-muramoyl-L-alanyl-D-glutamyl-meso-2,6-diaminopimeloyl-D-alanyl-D-alanine + UDP-N-acetyl-alpha-D-glucosamine = di-trans,octa-cis-undecaprenyl diphospho-[N-acetyl-alpha-D-glucosaminyl-(1-&gt;4)]-N-acetyl-alpha-D-muramoyl-L-alanyl-D-glutamyl-meso-2,6-diaminopimeloyl-D-alanyl-D-alanine + UDP + H(+). It functions in the pathway cell wall biogenesis; peptidoglycan biosynthesis. Its function is as follows. Cell wall formation. Catalyzes the transfer of a GlcNAc subunit on undecaprenyl-pyrophosphoryl-MurNAc-pentapeptide (lipid intermediate I) to form undecaprenyl-pyrophosphoryl-MurNAc-(pentapeptide)GlcNAc (lipid intermediate II). In Synechococcus sp. (strain CC9902), this protein is UDP-N-acetylglucosamine--N-acetylmuramyl-(pentapeptide) pyrophosphoryl-undecaprenol N-acetylglucosamine transferase.